The sequence spans 265 residues: NADH dehydrogenase [ubiquinone] iron-sulfur protein 3, mitochondrial (265 aa).

Residues 1 to 33 (MAALIRNLGARAAVAALSAKHVVPAAGSTALRM) constitute a mitochondrion transit peptide.

It belongs to the complex I 30 kDa subunit family. As to quaternary structure, part of the mitochondrial membrane respiratory chain NADH dehydrogenase (Complex I). Interacts with sicily; interaction is stronger with unprocessed sicily protein.

The protein resides in the mitochondrion. It carries out the reaction a ubiquinone + NADH + 5 H(+)(in) = a ubiquinol + NAD(+) + 4 H(+)(out). In terms of biological role, core subunit of the mitochondrial membrane respiratory chain NADH dehydrogenase (Complex I) that is believed to belong to the minimal assembly required for catalysis. Complex I functions in the transfer of electrons from NADH to the respiratory chain. The immediate electron acceptor for the enzyme is believed to be ubiquinone. This chain is NADH dehydrogenase [ubiquinone] iron-sulfur protein 3, mitochondrial, found in Drosophila melanogaster (Fruit fly).